The primary structure comprises 510 residues: 2,3-bisphosphoglycerate-independent phosphoglycerate mutase (510 aa).

Residues Asp-15 and Ser-65 each contribute to the Mn(2+) site. Ser-65 serves as the catalytic Phosphoserine intermediate. Residues His-126, 155 to 156 (RD), Arg-187, Arg-193, 259 to 262 (RPDR), and Lys-332 each bind substrate. Residues Asp-399, His-403, Asp-440, His-441, and His-458 each coordinate Mn(2+).

It belongs to the BPG-independent phosphoglycerate mutase family. Mn(2+) serves as cofactor.

Its subcellular location is the plastid. The protein localises to the chloroplast. The enzyme catalyses (2R)-2-phosphoglycerate = (2R)-3-phosphoglycerate. Its pathway is carbohydrate degradation; glycolysis; pyruvate from D-glyceraldehyde 3-phosphate: step 3/5. Functionally, catalyzes the interconversion of 2-phosphoglycerate and 3-phosphoglycerate. This is 2,3-bisphosphoglycerate-independent phosphoglycerate mutase from Antithamnion sp. (Red alga).